The following is a 159-amino-acid chain: Nucleotide-binding protein Pmen_0939 (159 aa).

It belongs to the YajQ family.

Functionally, nucleotide-binding protein. In Ectopseudomonas mendocina (strain ymp) (Pseudomonas mendocina), this protein is Nucleotide-binding protein Pmen_0939.